The chain runs to 372 residues: NAD(P)H-quinone oxidoreductase subunit 1 (372 aa).

8 helical membrane-spanning segments follow: residues 29-49 (WIPL…LVVV), 97-117 (WLFT…YLIV), 130-150 (VGIF…LMSG), 176-196 (LAFS…IDIV), 204-224 (ILGW…IAAL), 254-274 (FGLF…VFAI), 308-328 (SLGI…AVLL), and 347-367 (FLLP…LAFP).

The protein belongs to the complex I subunit 1 family. NDH-1 is composed of at least 11 different subunits.

It localises to the cellular thylakoid membrane. It carries out the reaction a plastoquinone + NADH + (n+1) H(+)(in) = a plastoquinol + NAD(+) + n H(+)(out). The enzyme catalyses a plastoquinone + NADPH + (n+1) H(+)(in) = a plastoquinol + NADP(+) + n H(+)(out). In terms of biological role, NDH-1 shuttles electrons from an unknown electron donor, via FMN and iron-sulfur (Fe-S) centers, to quinones in the respiratory and/or the photosynthetic chain. The immediate electron acceptor for the enzyme in this species is believed to be plastoquinone. Couples the redox reaction to proton translocation, and thus conserves the redox energy in a proton gradient. The sequence is that of NAD(P)H-quinone oxidoreductase subunit 1 from Rippkaea orientalis (strain PCC 8801 / RF-1) (Cyanothece sp. (strain PCC 8801)).